The chain runs to 101 residues: Small ribosomal subunit protein uS10 (101 aa).

It belongs to the universal ribosomal protein uS10 family. As to quaternary structure, part of the 30S ribosomal subunit.

Its function is as follows. Involved in the binding of tRNA to the ribosomes. The sequence is that of Small ribosomal subunit protein uS10 from Flavobacterium psychrophilum (strain ATCC 49511 / DSM 21280 / CIP 103535 / JIP02/86).